The sequence spans 847 residues: Nitrite reductase (NADH) large subunit (847 aa).

Residue 44–79 (YDRVHLSSYFSHHTAEELSLVREGFYEKHGIKVLVG) coordinates FAD. 193–225 (LRRKIESMGVRVHTSKNTLEIVQEGVEARKTMR) is an NAD(+) binding site. The [2Fe-2S] cluster site is built by C425, C427, C459, and C462. Positions 641, 647, 681, and 685 each coordinate [4Fe-4S] cluster. Residue C685 participates in siroheme binding.

The protein belongs to the nitrite and sulfite reductase 4Fe-4S domain family. In terms of assembly, homodimer which associates with NirD. Requires siroheme as cofactor. It depends on [2Fe-2S] cluster as a cofactor. The cofactor is [4Fe-4S] cluster. FAD serves as cofactor.

It carries out the reaction NH4(+) + 3 NAD(+) + 2 H2O = nitrite + 3 NADH + 5 H(+). The protein operates within nitrogen metabolism; nitrate reduction (assimilation). This Escherichia coli (strain K12) protein is Nitrite reductase (NADH) large subunit (nirB).